Here is a 375-residue protein sequence, read N- to C-terminus: MAATAQYLPRNNSLPSNPLMHPDSDRMHQGTTYREVQKMMHQEYLQGLATNAGHPMSLTHHQWLPNPTSDWGSGSHLGAQAEHGKSGVQSSREDLSSSFHHHRSHLVHQQTPSSHAWAQSGGHHLPSMSPGSNSHQPLIYSQSSYTNLNGMLGPQASSLHHSMRDPLHDDPGVHDTHVESPPQHLGHHQDHSDEDAPSSDDLEQFAKQFKQRRIKLGFTQADVGLALGTLYGNVFSQTTICRFEALQLSFKNMCKLKPLLNKWLEETDSTTGSPTNLDKIAAQGRKRKKRTSIEVGVKGALENHFLKCPKPSAHEITSLADSLQLEKEVVRVWFCNRRQKEKRMTPAGVPHPPMEDVYSQAETPPLHHTLQTSVQ.

3 disordered regions span residues 1–29, 56–139, and 151–200; these read MAATAQYLPRNNSLPSNPLMHPDSDRMHQ, MSLT…QPLI, and MLGP…PSSD. Composition is skewed to polar residues over residues 107–117, 129–139, and 151–160; these read VHQQTPSSHAW, SPGSNSHQPLI, and MLGPQASSLH. Over residues 162–178 the composition is skewed to basic and acidic residues; that stretch reads SMRDPLHDDPGVHDTHV. Residues 194–268 enclose the POU-specific domain; that stretch reads EDAPSSDDLE…LLNKWLEETD (75 aa). Residues 286 to 345 constitute a DNA-binding region (homeobox); it reads KRKKRTSIEVGVKGALENHFLKCPKPSAHEITSLADSLQLEKEVVRVWFCNRRQKEKRMT.

This sequence belongs to the POU transcription factor family. Class-3 subfamily.

It is found in the nucleus. Its function is as follows. Acts as a transcription factor. May play a role in neuronal differentiation. The protein is POU domain, class 3, transcription factor 1-B (pou3f1-b) of Xenopus laevis (African clawed frog).